A 220-amino-acid chain; its full sequence is Histone H1B (220 aa).

Disordered regions lie at residues 1-45 (MTAT…PSAS) and 99-220 (QVKG…APKK). Residues 28 to 45 (KKVAGGAKAKKPSGPSAS) show a composition bias toward low complexity. Positions 40 to 113 (SGPSASELIV…GASGSFKLNK (74 aa)) constitute an H15 domain. Composition is skewed to basic residues over residues 122–134 (AAKKKPAAPKAKK), 141–151 (KAPKSPKKPKK), 158–196 (SPKKVKKLAKAAKSPKKPKAVKAKKVAKSPAKKATKPKT), and 204–220 (KVAKPKAAKAKKPAPKK).

This sequence belongs to the histone H1/H5 family.

The protein localises to the nucleus. Its subcellular location is the chromosome. Histones H1 are necessary for the condensation of nucleosome chains into higher-order structures. This Xenopus laevis (African clawed frog) protein is Histone H1B.